The primary structure comprises 216 residues: LexA repressor 1 (216 aa).

A DNA-binding region (H-T-H motif) is located at residues 38-58 (TRQIGAAVGLRSMSSVARHLR). Catalysis depends on for autocatalytic cleavage activity residues Ser140 and Lys177.

The protein belongs to the peptidase S24 family. In terms of assembly, homodimer.

It carries out the reaction Hydrolysis of Ala-|-Gly bond in repressor LexA.. Its function is as follows. Represses a number of genes involved in the response to DNA damage (SOS response), including recA and lexA. In the presence of single-stranded DNA, RecA interacts with LexA causing an autocatalytic cleavage which disrupts the DNA-binding part of LexA, leading to derepression of the SOS regulon and eventually DNA repair. The sequence is that of LexA repressor 1 from Nocardia farcinica (strain IFM 10152).